We begin with the raw amino-acid sequence, 494 residues long: UPF0371 protein SP_0341 (494 aa).

It belongs to the UPF0371 family.

The sequence is that of UPF0371 protein SP_0341 from Streptococcus pneumoniae serotype 4 (strain ATCC BAA-334 / TIGR4).